Reading from the N-terminus, the 679-residue chain is DNA ligase (679 aa).

NAD(+) contacts are provided by residues 43–47 (DYVYD), 92–93 (SM), and Glu-124. Residue Lys-126 is the N6-AMP-lysine intermediate of the active site. NAD(+) contacts are provided by Arg-147, Glu-181, Lys-297, and Lys-321. The Zn(2+) site is built by Cys-415, Cys-418, Cys-433, and Cys-438. Residues 599–679 (TESAEWAGKR…RFDQAMKEEN (81 aa)) form the BRCT domain.

Belongs to the NAD-dependent DNA ligase family. LigA subfamily. The cofactor is Mg(2+). Requires Mn(2+) as cofactor.

It catalyses the reaction NAD(+) + (deoxyribonucleotide)n-3'-hydroxyl + 5'-phospho-(deoxyribonucleotide)m = (deoxyribonucleotide)n+m + AMP + beta-nicotinamide D-nucleotide.. Functionally, DNA ligase that catalyzes the formation of phosphodiester linkages between 5'-phosphoryl and 3'-hydroxyl groups in double-stranded DNA using NAD as a coenzyme and as the energy source for the reaction. It is essential for DNA replication and repair of damaged DNA. This chain is DNA ligase, found in Limosilactobacillus fermentum (strain NBRC 3956 / LMG 18251) (Lactobacillus fermentum).